A 66-amino-acid chain; its full sequence is Large ribosomal subunit protein bL35 (66 aa).

Basic residues predominate over residues 1–14 (MPKMKTKSAAKKRF). Residues 1 to 34 (MPKMKTKSAAKKRFSMTATGKVKAGPAGKRHGMI) form a disordered region.

Belongs to the bacterial ribosomal protein bL35 family.

This is Large ribosomal subunit protein bL35 from Paracoccus denitrificans (strain Pd 1222).